A 228-amino-acid chain; its full sequence is Flagellar L-ring protein (228 aa).

The signal sequence occupies residues 1-17 (MHYLRYFAIAFLLLLSS). Cysteine 18 is lipidated: N-palmitoyl cysteine. A lipid anchor (S-diacylglycerol cysteine) is attached at cysteine 18.

It belongs to the FlgH family. As to quaternary structure, the basal body constitutes a major portion of the flagellar organelle and consists of four rings (L,P,S, and M) mounted on a central rod.

The protein resides in the cell membrane. Its subcellular location is the bacterial flagellum basal body. Functionally, assembles around the rod to form the L-ring and probably protects the motor/basal body from shearing forces during rotation. This is Flagellar L-ring protein from Wigglesworthia glossinidia brevipalpis.